The following is a 227-amino-acid chain: MPVRAILTDIEGTTSAVSFVFDVLFPYAREHLPAFVRRHAAEAEVATQLEAVRAESGEADADIERVIEILLGWIAEDRKATPLKALQGMVWEQGYRASALKGHVYPDAVATMRRWKHEGYQLYVYSSGSIQAQRLIFGCSEAGDLSPLFSGYFDTTSGPKREAASYVRIAEAIGRPPAEILFLSDVLQELDAARAAGMCTCGLAREGGELDGHPTVSSFTAIEPAAC.

It belongs to the HAD-like hydrolase superfamily. MasA/MtnC family. As to quaternary structure, monomer. Mg(2+) serves as cofactor.

It carries out the reaction 5-methylsulfanyl-2,3-dioxopentyl phosphate + H2O = 1,2-dihydroxy-5-(methylsulfanyl)pent-1-en-3-one + phosphate. Its pathway is amino-acid biosynthesis; L-methionine biosynthesis via salvage pathway; L-methionine from S-methyl-5-thio-alpha-D-ribose 1-phosphate: step 3/6. It participates in amino-acid biosynthesis; L-methionine biosynthesis via salvage pathway; L-methionine from S-methyl-5-thio-alpha-D-ribose 1-phosphate: step 4/6. In terms of biological role, bifunctional enzyme that catalyzes the enolization of 2,3-diketo-5-methylthiopentyl-1-phosphate (DK-MTP-1-P) into the intermediate 2-hydroxy-3-keto-5-methylthiopentenyl-1-phosphate (HK-MTPenyl-1-P), which is then dephosphorylated to form the acireductone 1,2-dihydroxy-3-keto-5-methylthiopentene (DHK-MTPene). The sequence is that of Enolase-phosphatase E1 from Azotobacter vinelandii (strain DJ / ATCC BAA-1303).